The primary structure comprises 450 residues: Ribosomal protein uS12 methylthiotransferase RimO (450 aa).

In terms of domain architecture, MTTase N-terminal spans 16 to 126 (PRISFVSLGC…VLDAVHQAVP (111 aa)). [4Fe-4S] cluster is bound by residues Cys25, Cys61, Cys90, Cys157, Cys161, and Cys164. Positions 143-380 (LTPRHYAYLK…MLKQQAISAR (238 aa)) constitute a Radical SAM core domain. Positions 383-449 (KRKVGTRQQV…AYDLIGSAVG (67 aa)) constitute a TRAM domain.

This sequence belongs to the methylthiotransferase family. RimO subfamily. Requires [4Fe-4S] cluster as cofactor.

The protein resides in the cytoplasm. It catalyses the reaction L-aspartate(89)-[ribosomal protein uS12]-hydrogen + (sulfur carrier)-SH + AH2 + 2 S-adenosyl-L-methionine = 3-methylsulfanyl-L-aspartate(89)-[ribosomal protein uS12]-hydrogen + (sulfur carrier)-H + 5'-deoxyadenosine + L-methionine + A + S-adenosyl-L-homocysteine + 2 H(+). Its function is as follows. Catalyzes the methylthiolation of an aspartic acid residue of ribosomal protein uS12. The protein is Ribosomal protein uS12 methylthiotransferase RimO of Azorhizobium caulinodans (strain ATCC 43989 / DSM 5975 / JCM 20966 / LMG 6465 / NBRC 14845 / NCIMB 13405 / ORS 571).